We begin with the raw amino-acid sequence, 366 residues long: Spermidine/putrescine import ATP-binding protein PotA (366 aa).

An ABC transporter domain is found at 8-239 (IRFENVTKQF…PINKFVADFI (232 aa)). 41–48 (GPSGCGKT) is a binding site for ATP.

Belongs to the ABC transporter superfamily. Spermidine/putrescine importer (TC 3.A.1.11.1) family. As to quaternary structure, the complex is composed of two ATP-binding proteins (PotA), two transmembrane proteins (PotB and PotC) and a solute-binding protein (PotD).

The protein resides in the cell membrane. It catalyses the reaction ATP + H2O + polyamine-[polyamine-binding protein]Side 1 = ADP + phosphate + polyamineSide 2 + [polyamine-binding protein]Side 1.. Part of the ABC transporter complex PotABCD involved in spermidine/putrescine import. Responsible for energy coupling to the transport system. The sequence is that of Spermidine/putrescine import ATP-binding protein PotA from Listeria monocytogenes serotype 4b (strain F2365).